Reading from the N-terminus, the 769-residue chain is Phosphoribosylformylglycinamidine synthase subunit PurL (769 aa).

The segment covering 1-13 (MTGTPSAPTTSPD) has biased composition (polar residues). The tract at residues 1-30 (MTGTPSAPTTSPDDQADGPGEGTVDRQPYR) is disordered. Residue histidine 65 is part of the active site. Tyrosine 68 and lysine 109 together coordinate ATP. Position 111 (glutamate 111) interacts with Mg(2+). Residues 112–115 (SHNH) and arginine 134 contribute to the substrate site. Histidine 113 serves as the catalytic Proton acceptor. Aspartate 135 serves as a coordination point for Mg(2+). Residue glutamine 260 coordinates substrate. Residue aspartate 288 coordinates Mg(2+). 337-339 (ESQ) is a binding site for substrate. The ATP site is built by asparagine 524 and glycine 561. Asparagine 562 is a binding site for Mg(2+). Serine 564 contacts substrate.

Belongs to the FGAMS family. In terms of assembly, monomer. Part of the FGAM synthase complex composed of 1 PurL, 1 PurQ and 2 PurS subunits.

The protein localises to the cytoplasm. The catalysed reaction is N(2)-formyl-N(1)-(5-phospho-beta-D-ribosyl)glycinamide + L-glutamine + ATP + H2O = 2-formamido-N(1)-(5-O-phospho-beta-D-ribosyl)acetamidine + L-glutamate + ADP + phosphate + H(+). It functions in the pathway purine metabolism; IMP biosynthesis via de novo pathway; 5-amino-1-(5-phospho-D-ribosyl)imidazole from N(2)-formyl-N(1)-(5-phospho-D-ribosyl)glycinamide: step 1/2. Functionally, part of the phosphoribosylformylglycinamidine synthase complex involved in the purines biosynthetic pathway. Catalyzes the ATP-dependent conversion of formylglycinamide ribonucleotide (FGAR) and glutamine to yield formylglycinamidine ribonucleotide (FGAM) and glutamate. The FGAM synthase complex is composed of three subunits. PurQ produces an ammonia molecule by converting glutamine to glutamate. PurL transfers the ammonia molecule to FGAR to form FGAM in an ATP-dependent manner. PurS interacts with PurQ and PurL and is thought to assist in the transfer of the ammonia molecule from PurQ to PurL. The polypeptide is Phosphoribosylformylglycinamidine synthase subunit PurL (Parafrankia sp. (strain EAN1pec)).